We begin with the raw amino-acid sequence, 64 residues long: MAQEQTKRGGGGDDDDVTDLGGPAGQERREKLAEDTDDLLDEIDDVLEENAEDFVRAYVQKGGQ.

Positions 1–11 (MAQEQTKRGGG) are enriched in basic and acidic residues. The segment at 1–36 (MAQEQTKRGGGGDDDDVTDLGGPAGQERREKLAEDT) is disordered. The interval 21 to 58 (GGPAGQERREKLAEDTDDLLDEIDDVLEENAEDFVRAY) is ARC ATPase binding. A coiled-coil region spans residues 24–52 (AGQERREKLAEDTDDLLDEIDDVLEENAE). At Gln-64 the chain carries Deamidated glutamine. Gln-64 is covalently cross-linked (Isoglutamyl lysine isopeptide (Gln-Lys) (interchain with K-? in acceptor proteins)).

The protein belongs to the prokaryotic ubiquitin-like protein family. In terms of assembly, strongly interacts with the proteasome-associated ATPase ARC through a hydrophobic interface; the interacting region of Pup lies in its C-terminal half. There is one Pup binding site per ARC hexamer ring. Post-translationally, is modified by deamidation of its C-terminal glutamine to glutamate by the deamidase Dop, a prerequisite to the subsequent pupylation process.

Its pathway is protein degradation; proteasomal Pup-dependent pathway. Protein modifier that is covalently attached to lysine residues of substrate proteins, thereby targeting them for proteasomal degradation. The tagging system is termed pupylation. This Mycobacteroides abscessus (strain ATCC 19977 / DSM 44196 / CCUG 20993 / CIP 104536 / JCM 13569 / NCTC 13031 / TMC 1543 / L948) (Mycobacterium abscessus) protein is Prokaryotic ubiquitin-like protein Pup.